The sequence spans 442 residues: D-serine dehydratase (442 aa).

At Lys118 the chain carries N6-(pyridoxal phosphate)lysine.

It belongs to the serine/threonine dehydratase family. DsdA subfamily. As to quaternary structure, monomer. Requires pyridoxal 5'-phosphate as cofactor.

It carries out the reaction D-serine = pyruvate + NH4(+). This is D-serine dehydratase from Shigella flexneri.